A 254-amino-acid chain; its full sequence is Protein EFFECTOR OF TRANSCRIPTION 3 (254 aa).

Residues 103–152 (RCTGLYELGVGVIGQDQGQNFDPDNNVLGVYVGQCVDVKSRLQDYGRRGG) enclose the GIY-YIG domain.

It localises to the cytoplasm. The protein is Protein EFFECTOR OF TRANSCRIPTION 3 of Arabidopsis thaliana (Mouse-ear cress).